The chain runs to 160 residues: Ureidoglycolate lyase (160 aa).

This sequence belongs to the ureidoglycolate lyase family. As to quaternary structure, homodimer. It depends on Ni(2+) as a cofactor.

It carries out the reaction (S)-ureidoglycolate = urea + glyoxylate. Its pathway is nitrogen metabolism; (S)-allantoin degradation. In terms of biological role, catalyzes the catabolism of the allantoin degradation intermediate (S)-ureidoglycolate, generating urea and glyoxylate. Involved in the utilization of allantoin as nitrogen source. This chain is Ureidoglycolate lyase, found in Salmonella enteritidis.